The following is a 152-amino-acid chain: Zinc finger SWIM domain-containing protein 7 (152 aa).

Residues 76–114 (YTCLASCHYCSCPAFSFSVLRKSDSLLCKHLLAIYLSQL) form an SWIM-type zinc finger.

It belongs to the SWS1 family. As to quaternary structure, interacts with RAD51D and XRCC3; involved in homologous recombination repair. Interacts with SWSAP1; they form a functional complex involved in homologous recombination repair and stabilize each other.

It localises to the nucleus. Involved in early stages of the homologous recombination repair (HRR) pathway of double-stranded DNA breaks arising during DNA replication or induced by DNA-damaging agents. Required for meiotic progression, hence for fertility. This Mus musculus (Mouse) protein is Zinc finger SWIM domain-containing protein 7 (Zswim7).